A 253-amino-acid chain; its full sequence is ATP synthase subunit a (253 aa).

6 helical membrane-spanning segments follow: residues 34–54 (SSLF…LSFY), 89–109 (YFPF…IGMI), 118–138 (HIVF…LIGI), 156–178 (LAIV…FTLS), 203–223 (LSAG…LLAL), and 226–246 (LELA…CIYL).

Belongs to the ATPase A chain family. F-type ATPases have 2 components, CF(1) - the catalytic core - and CF(0) - the membrane proton channel. CF(1) has five subunits: alpha(3), beta(3), gamma(1), delta(1), epsilon(1). CF(0) has three main subunits: a, b and c.

The protein resides in the mitochondrion inner membrane. Functionally, mitochondrial membrane ATP synthase (F(1)F(0) ATP synthase or Complex V) produces ATP from ADP in the presence of a proton gradient across the membrane which is generated by electron transport complexes of the respiratory chain. F-type ATPases consist of two structural domains, F(1) - containing the extramembraneous catalytic core and F(0) - containing the membrane proton channel, linked together by a central stalk and a peripheral stalk. During catalysis, ATP synthesis in the catalytic domain of F(1) is coupled via a rotary mechanism of the central stalk subunits to proton translocation. Key component of the proton channel; it may play a direct role in the translocation of protons across the membrane. The polypeptide is ATP synthase subunit a (ATP6) (Chondrus crispus (Carrageen Irish moss)).